The chain runs to 268 residues: Expansin-B3 (268 aa).

The N-terminal stretch at 1–25 (MAFSISKKAAVAALFSFLVVTCVAG) is a signal peptide. N-linked (GlcNAc...) asparagine glycosylation occurs at asparagine 30. One can recognise an Expansin-like EG45 domain in the interval 62–168 (GGACGFKNTN…KRVPCNFPGL (107 aa)). 3 disulfide bridges follow: cysteine 65–cysteine 93, cysteine 96–cysteine 163, and cysteine 101–cysteine 107. One can recognise an Expansin-like CBD domain in the interval 181–262 (VYFAVLVEYE…NWAPMAVYRS (82 aa)). Asparagine 238 carries an N-linked (GlcNAc...) asparagine glycan.

Belongs to the expansin family. Expansin B subfamily. In terms of tissue distribution, expressed in roots, coleoptiles and internodes.

The protein localises to the secreted. It is found in the cell wall. Its subcellular location is the membrane. In terms of biological role, may cause loosening and extension of plant cell walls by disrupting non-covalent bonding between cellulose microfibrils and matrix glucans. No enzymatic activity has been found. May be required for rapid internodal elongation in deepwater rice during submergence. The chain is Expansin-B3 (EXPB3) from Oryza sativa subsp. japonica (Rice).